The chain runs to 396 residues: S100P-binding protein (396 aa).

The interval 145 to 249 (CDPVLDKDKI…RKNSGSHKSG (105 aa)) is disordered. Basic and acidic residues-rich tracts occupy residues 148–161 (VLDK…KETE) and 168–185 (EQTR…RCTE). Polar residues-rich tracts occupy residues 202–215 (SSPS…TASD) and 227–246 (VFSQ…SGSH).

Interacts with S100P.

It localises to the nucleus. The sequence is that of S100P-binding protein from Mus musculus (Mouse).